The primary structure comprises 62 residues: MTQHLHFRCPCCHGSQYRTSAFDVTERNPLGAKCIFCKSTMITFDNVALQIRTDHAPLDFTK.

Belongs to the YmcF/YnqF peptide family.

The sequence is that of Protein YmcF from Escherichia coli (strain K12).